The chain runs to 160 residues: Transcription elongation factor GreA (160 aa).

Residues 43 to 76 (LSENAEYDAAREQQRQLENKIGDLESKLTRATIL) are a coiled coil.

The protein belongs to the GreA/GreB family.

In terms of biological role, necessary for efficient RNA polymerase transcription elongation past template-encoded arresting sites. The arresting sites in DNA have the property of trapping a certain fraction of elongating RNA polymerases that pass through, resulting in locked ternary complexes. Cleavage of the nascent transcript by cleavage factors such as GreA or GreB allows the resumption of elongation from the new 3'terminus. GreA releases sequences of 2 to 3 nucleotides. The chain is Transcription elongation factor GreA from Chlorobium phaeobacteroides (strain BS1).